The sequence spans 518 residues: Sensor protein kinase HptS (518 aa).

Transmembrane regions (helical) follow at residues 20–40 (IFPV…IYIW) and 222–242 (GITL…FGFI). In terms of domain architecture, Histidine kinase spans 297–513 (EQLIHSIEHT…LICYKIPLSR (217 aa)). H325 bears the Phosphohistidine; by autocatalysis mark.

In terms of processing, autophosphorylated.

The protein localises to the cell membrane. It catalyses the reaction ATP + protein L-histidine = ADP + protein N-phospho-L-histidine.. Functionally, member of the two-component regulatory system HptS/HptR that regulates genes involved in hexose phosphate transport system in response to changes in extracellular phosphate sources. May act as a sensor protein kinase which is autophosphorylated at a histidine residue and transfers its phosphate group to the conserved aspartic acid residue in the regulatory domain of HptS. In turn, HptS antagonizes CcpA-dependent transcription of a subset of CcpA-regulated genes involved in antibiotic susceptibility. The chain is Sensor protein kinase HptS (hptS) from Staphylococcus aureus (strain Mu50 / ATCC 700699).